Consider the following 361-residue polypeptide: Phospho-N-acetylmuramoyl-pentapeptide-transferase (361 aa).

The next 10 helical transmembrane spans lie at 21–41, 73–93, 97–117, 134–154, 168–188, 200–220, 237–257, 264–284, 289–309, and 338–358; these read YITLRAVLATLTALTISFLVG, TMGGALILIAIVISTLLWADL, FVWVVLITTLGFGVIGWVDDW, YFWQSLIGAGVAAYLFHTATV, LVLPLGAVSFIVLTYFVIVGT, GLAIMPTVMVASALAVFAYVA, AGELTVFCAAIGGAGLGFLWF, VFMGDVGALALGAALGTVAVI, IVLFIMGGVFVMETISVMLQV, and QVVVRFWIITMMLVLVGLSTL.

Belongs to the glycosyltransferase 4 family. MraY subfamily. It depends on Mg(2+) as a cofactor.

The protein resides in the cell inner membrane. It catalyses the reaction UDP-N-acetyl-alpha-D-muramoyl-L-alanyl-gamma-D-glutamyl-meso-2,6-diaminopimeloyl-D-alanyl-D-alanine + di-trans,octa-cis-undecaprenyl phosphate = di-trans,octa-cis-undecaprenyl diphospho-N-acetyl-alpha-D-muramoyl-L-alanyl-D-glutamyl-meso-2,6-diaminopimeloyl-D-alanyl-D-alanine + UMP. The protein operates within cell wall biogenesis; peptidoglycan biosynthesis. Functionally, catalyzes the initial step of the lipid cycle reactions in the biosynthesis of the cell wall peptidoglycan: transfers peptidoglycan precursor phospho-MurNAc-pentapeptide from UDP-MurNAc-pentapeptide onto the lipid carrier undecaprenyl phosphate, yielding undecaprenyl-pyrophosphoryl-MurNAc-pentapeptide, known as lipid I. The chain is Phospho-N-acetylmuramoyl-pentapeptide-transferase from Methylobacillus flagellatus (strain ATCC 51484 / DSM 6875 / VKM B-1610 / KT).